A 196-amino-acid polypeptide reads, in one-letter code: Gastrula zinc finger protein XlCGF8.2DB (196 aa).

7 consecutive C2H2-type zinc fingers follow at residues 6 to 28 (FTCK…MTIH), 34 to 56 (FSCT…LTIH), 62 to 84 (FPCT…MKIH), 90 to 112 (FTCT…LKIH), 118 to 140 (FSCT…MKIH), 146 to 168 (FTCT…LKMH), and 174 to 196 (FTCT…MKIH).

Belongs to the krueppel C2H2-type zinc-finger protein family.

It localises to the nucleus. Functionally, may be involved in transcriptional regulation. This is Gastrula zinc finger protein XlCGF8.2DB from Xenopus laevis (African clawed frog).